The sequence spans 153 residues: Small ribosomal subunit protein bS16 (153 aa).

The disordered stretch occupies residues 114-153 (ENEPVGEAITPKKKKAKAEDAEAAADAPAEAAAESEAADK). Low complexity predominate over residues 137-153 (AADAPAEAAAESEAADK).

The protein belongs to the bacterial ribosomal protein bS16 family.

This Rhodococcus jostii (strain RHA1) protein is Small ribosomal subunit protein bS16.